The chain runs to 216 residues: Somatotropin (216 aa).

The signal sequence occupies residues 1–26 (MAADPQSSVLLAFALLCLPWPQEVGA). Residue His-45 participates in Zn(2+) binding. Cys-78 and Cys-189 form a disulfide bridge. Ser-131 carries the phosphoserine modification. Residue Glu-198 coordinates Zn(2+). A disulfide bridge connects residues Cys-206 and Cys-214.

Belongs to the somatotropin/prolactin family.

The protein resides in the secreted. Its function is as follows. Plays an important role in growth control. Its major role in stimulating body growth is to stimulate the liver and other tissues to secrete IGF1. It stimulates both the differentiation and proliferation of myoblasts. It also stimulates amino acid uptake and protein synthesis in muscle and other tissues. This is Somatotropin (GH1) from Ailuropoda melanoleuca (Giant panda).